Reading from the N-terminus, the 166-residue chain is Bacterial non-heme ferritin (166 aa).

The region spanning Leu2 to Gly145 is the Ferritin-like diiron domain. Fe cation-binding residues include Glu17, Glu50, His53, Glu94, and Gln127.

The protein belongs to the ferritin family. Prokaryotic subfamily.

Its subcellular location is the cytoplasm. It catalyses the reaction 4 Fe(2+) + O2 + 6 H2O = 4 iron(III) oxide-hydroxide + 12 H(+). Iron-storage protein. This is Bacterial non-heme ferritin (ftnA) from Staphylococcus epidermidis (strain ATCC 12228 / FDA PCI 1200).